Consider the following 195-residue polypeptide: Imidazoleglycerol-phosphate dehydratase (195 aa).

Belongs to the imidazoleglycerol-phosphate dehydratase family.

Its subcellular location is the cytoplasm. It catalyses the reaction D-erythro-1-(imidazol-4-yl)glycerol 3-phosphate = 3-(imidazol-4-yl)-2-oxopropyl phosphate + H2O. It functions in the pathway amino-acid biosynthesis; L-histidine biosynthesis; L-histidine from 5-phospho-alpha-D-ribose 1-diphosphate: step 6/9. The polypeptide is Imidazoleglycerol-phosphate dehydratase (Cupriavidus metallidurans (strain ATCC 43123 / DSM 2839 / NBRC 102507 / CH34) (Ralstonia metallidurans)).